Here is an 853-residue protein sequence, read N- to C-terminus: Wolframin (853 aa).

Residues lysine 139–glutamate 179 are disordered. The segment covering lysine 144 to arginine 157 has biased composition (basic residues). A compositionally biased stretch (acidic residues) spans glycine 169–glutamate 179. Transmembrane regions (helical) follow at residues methionine 238–valine 258, serine 259–tryptophan 279, leucine 285–leucine 305, leucine 347–tryptophan 367, leucine 373–serine 393, phenylalanine 446–alanine 466, glycine 473–alanine 493, isoleucine 513–isoleucine 533, tryptophan 545–asparagine 565, and isoleucine 572–methionine 592. Residues asparagine 694 and asparagine 769 are each glycosylated (N-linked (GlcNAc...) asparagine).

As to expression, detected in adult brain.

It is found in the membrane. Its subcellular location is the endoplasmic reticulum. The protein localises to the mitochondrion. Functionally, participates in the regulation of cellular Ca(2+) homeostasis, at least partly, by modulating the filling state of the endoplasmic reticulum Ca(2+) store. In neurons and glial cells, has a role in maintaining neuronal function and integrity during aging. The chain is Wolframin from Drosophila melanogaster (Fruit fly).